The chain runs to 215 residues: Putative lipoprotein NMB1124/NMB1162 (215 aa).

An N-terminal signal peptide occupies residues 1-16; the sequence is MKPLILGLAAVLALSA. Residue C17 is the site of N-palmitoyl cysteine attachment. The S-diacylglycerol cysteine moiety is linked to residue C17.

Its subcellular location is the cell membrane. The protein is Putative lipoprotein NMB1124/NMB1162 of Neisseria meningitidis serogroup B (strain ATCC BAA-335 / MC58).